The following is a 645-amino-acid chain: MNKQQKEFKSFYSIRKSSLGVASVAISTLLLLMSNGEAQAAAEETGGTNTEAQPKTEAVASPTTTSEKAPETKPVANAVSVSNKEVEAPTSETKEAKEVKEVKAPKETKAVKPAAKATNNTYPILNQELREAIKNPAIKDKDHSAPNSRPIDFEMKKENGEQQFYHYASSVKPARVIFTDSKPEIELGLQSGQFWRKFEVYEGDKKLPIKLVSYDTVKDYAYIRFSVSNGTKAVKIVSSTHFNNKEEKYDYTLMEFAQPIYNSADKFKTEEDYKAEKLLAPYKKAKTLERQVYELNKIQDKLPEKLKAEYKKKLEDTKKALDEQVKSAITEFQNVQPTNEKMTDLQDTKYVVYESVENNESMMDTFVKHPIKTGMLNGKKYMVMETTNDDYWKDFMVEGQRVRTISKDAKNNTRTIIFPYVEGKTLYDAIVKVHVKTIDYDGQYHVRIVDKEAFTKANTDKSNKKEQQDNSAKKEATPATPSKPTPSPVEKESQKQDSQKDDNKQLPSVEKENDASSESGKDKTPATKPTKGEVESSSTTPTKVVSTTQNVAKPTTASSKTTKDVVQTSAGSSEAKDSAPLQKANIKNTNDGHTQSQNNKNTQENKAKSLPQTGEESNKDMTLPLMALLALSSIVAFVLPRKRKN.

The signal sequence occupies residues 1 to 40 (MNKQQKEFKSFYSIRKSSLGVASVAISTLLLLMSNGEAQA). The short motif at 12–23 (YSIRKSSLGVAS) is the YSIRK-G/S signaling motif element. Residues 38–53 (AQAAAEETGGTNTEAQ) show a composition bias toward low complexity. Residues 38 to 113 (AQAAAEETGG…APKETKAVKP (76 aa)) are disordered. Positions 84 to 110 (KEVEAPTSETKEAKEVKEVKAPKETKA) are enriched in basic and acidic residues. NEAT domains are found at residues 144–269 (SAPN…KFKT) and 341–458 (KMTD…TKAN). Positions 362 and 440 each coordinate heme. Basic and acidic residues-rich tracts occupy residues 458-476 (NTDKSNKKEQQDNSAKKEA) and 489-534 (VEKE…KGEV). A disordered region spans residues 458-619 (NTDKSNKKEQ…LPQTGEESNK (162 aa)). Positions 535 to 560 (ESSSTTPTKVVSTTQNVAKPTTASSK) are enriched in low complexity. A compositionally biased stretch (polar residues) spans 585 to 615 (NIKNTNDGHTQSQNNKNTQENKAKSLPQTGE). An LPXTG sorting signal motif is present at residues 610 to 614 (LPQTG). A Pentaglycyl murein peptidoglycan amidated threonine modification is found at T613. Positions 614-645 (GEESNKDMTLPLMALLALSSIVAFVLPRKRKN) are cleaved as a propeptide — removed by sortase.

This sequence belongs to the IsdB family. Interacts with host HBA; this interaction allows heme extraction as iron source. Interacts with IsdA.

It is found in the secreted. The protein localises to the cell wall. Cell wall-anchored surface receptor that extracts heme from oxidized metHb to enable growth on hemoglobin as a sole iron source. Rapidly extracts heme from hemoglobin and transfers it to IsdA or IsdC, which then relays it to the membrane transporter/IsdEF for internalization. Also promotes resistance to hydrogen peroxide and killing by neutrophils. The polypeptide is Iron-regulated surface determinant protein B (isdB) (Staphylococcus aureus (strain Mu3 / ATCC 700698)).